Here is a 211-residue protein sequence, read N- to C-terminus: Thiamine-phosphate synthase (211 aa).

Residues 35–39 (QLRDK) and asparagine 67 contribute to the 4-amino-2-methyl-5-(diphosphooxymethyl)pyrimidine site. Mg(2+)-binding residues include aspartate 68 and aspartate 87. Residue serine 106 participates in 4-amino-2-methyl-5-(diphosphooxymethyl)pyrimidine binding. 2-[(2R,5Z)-2-carboxy-4-methylthiazol-5(2H)-ylidene]ethyl phosphate is bound at residue 132-134 (TGS). 4-amino-2-methyl-5-(diphosphooxymethyl)pyrimidine is bound at residue lysine 135. Residues glycine 163 and 183-184 (IS) contribute to the 2-[(2R,5Z)-2-carboxy-4-methylthiazol-5(2H)-ylidene]ethyl phosphate site.

The protein belongs to the thiamine-phosphate synthase family. Mg(2+) is required as a cofactor.

The enzyme catalyses 2-[(2R,5Z)-2-carboxy-4-methylthiazol-5(2H)-ylidene]ethyl phosphate + 4-amino-2-methyl-5-(diphosphooxymethyl)pyrimidine + 2 H(+) = thiamine phosphate + CO2 + diphosphate. The catalysed reaction is 2-(2-carboxy-4-methylthiazol-5-yl)ethyl phosphate + 4-amino-2-methyl-5-(diphosphooxymethyl)pyrimidine + 2 H(+) = thiamine phosphate + CO2 + diphosphate. It carries out the reaction 4-methyl-5-(2-phosphooxyethyl)-thiazole + 4-amino-2-methyl-5-(diphosphooxymethyl)pyrimidine + H(+) = thiamine phosphate + diphosphate. The protein operates within cofactor biosynthesis; thiamine diphosphate biosynthesis; thiamine phosphate from 4-amino-2-methyl-5-diphosphomethylpyrimidine and 4-methyl-5-(2-phosphoethyl)-thiazole: step 1/1. Functionally, condenses 4-methyl-5-(beta-hydroxyethyl)thiazole monophosphate (THZ-P) and 2-methyl-4-amino-5-hydroxymethyl pyrimidine pyrophosphate (HMP-PP) to form thiamine monophosphate (TMP). This Methanoculleus marisnigri (strain ATCC 35101 / DSM 1498 / JR1) protein is Thiamine-phosphate synthase.